We begin with the raw amino-acid sequence, 418 residues long: Tyrosine--tRNA ligase (418 aa).

Tyr34 contacts L-tyrosine. Positions 39–48 (PTADSLHLGH) match the 'HIGH' region motif. Tyr169 and Gln173 together coordinate L-tyrosine. Residues 229 to 233 (KFGKS) carry the 'KMSKS' region motif. Lys232 lines the ATP pocket. One can recognise an S4 RNA-binding domain in the interval 352-418 (LNIVEILVSS…GKKKYAVLTY (67 aa)).

It belongs to the class-I aminoacyl-tRNA synthetase family. TyrS type 1 subfamily. In terms of assembly, homodimer.

Its subcellular location is the cytoplasm. The catalysed reaction is tRNA(Tyr) + L-tyrosine + ATP = L-tyrosyl-tRNA(Tyr) + AMP + diphosphate + H(+). Functionally, catalyzes the attachment of tyrosine to tRNA(Tyr) in a two-step reaction: tyrosine is first activated by ATP to form Tyr-AMP and then transferred to the acceptor end of tRNA(Tyr). The chain is Tyrosine--tRNA ligase from Streptococcus uberis (strain ATCC BAA-854 / 0140J).